Here is a 352-residue protein sequence, read N- to C-terminus: Elongation factor Ts (352 aa).

Residues Thr-81 to Val-84 are involved in Mg(2+) ion dislocation from EF-Tu.

This sequence belongs to the EF-Ts family.

It localises to the cytoplasm. Functionally, associates with the EF-Tu.GDP complex and induces the exchange of GDP to GTP. It remains bound to the aminoacyl-tRNA.EF-Tu.GTP complex up to the GTP hydrolysis stage on the ribosome. The protein is Elongation factor Ts of Campylobacter hominis (strain ATCC BAA-381 / DSM 21671 / CCUG 45161 / LMG 19568 / NCTC 13146 / CH001A).